The sequence spans 128 residues: ATP synthase epsilon chain (128 aa).

Residues 98-128 are disordered; it reads EALDMPSSTPEQAQIKDAAVRRARGQLRASR. Basic residues predominate over residues 118–128; the sequence is RRARGQLRASR.

The protein belongs to the ATPase epsilon chain family. As to quaternary structure, F-type ATPases have 2 components, CF(1) - the catalytic core - and CF(0) - the membrane proton channel. CF(1) has five subunits: alpha(3), beta(3), gamma(1), delta(1), epsilon(1). CF(0) has three main subunits: a, b and c.

It localises to the cell inner membrane. In terms of biological role, produces ATP from ADP in the presence of a proton gradient across the membrane. The protein is ATP synthase epsilon chain of Rhodopirellula baltica (strain DSM 10527 / NCIMB 13988 / SH1).